We begin with the raw amino-acid sequence, 816 residues long: Leucine--tRNA ligase (816 aa).

The 'HIGH' region motif lies at 40–51; the sequence is SYPSGSQLHAGH. The 'KMSKS' region signature appears at 576–580; that stretch reads KMSKS. Lys-579 serves as a coordination point for ATP.

The protein belongs to the class-I aminoacyl-tRNA synthetase family.

Its subcellular location is the cytoplasm. It catalyses the reaction tRNA(Leu) + L-leucine + ATP = L-leucyl-tRNA(Leu) + AMP + diphosphate. This chain is Leucine--tRNA ligase, found in Clostridium perfringens (strain SM101 / Type A).